A 145-amino-acid chain; its full sequence is 3-hydroxyacyl-[acyl-carrier-protein] dehydratase FabZ (145 aa).

Residue His-48 is part of the active site.

Belongs to the thioester dehydratase family. FabZ subfamily.

Its subcellular location is the cytoplasm. The catalysed reaction is a (3R)-hydroxyacyl-[ACP] = a (2E)-enoyl-[ACP] + H2O. Its function is as follows. Involved in unsaturated fatty acids biosynthesis. Catalyzes the dehydration of short chain beta-hydroxyacyl-ACPs and long chain saturated and unsaturated beta-hydroxyacyl-ACPs. This Stutzerimonas stutzeri (strain A1501) (Pseudomonas stutzeri) protein is 3-hydroxyacyl-[acyl-carrier-protein] dehydratase FabZ.